The sequence spans 1275 residues: Inner capsid protein lambda-1 (1275 aa).

Basic residues predominate over residues 1 to 12 (MKRIPRKTKGKS). The tract at residues 1–149 (MKRIPRKTKG…DNEGGSNQKP (149 aa)) is disordered. 2 stretches are compositionally biased toward basic and acidic residues: residues 18–35 (DSTE…DKQN) and 75–117 (NNDE…DKSK). A compositionally biased stretch (polar residues) spans 118 to 149 (AQVTYSDTGINNANELSRSGNVDNEGGSNQKP). A C2H2-type zinc finger spans residues 181-203 (YQCHVCSAVLFSPLDLDAHVASH).

Belongs to the turreted BTV-fold inner capsid family. Homodecamer; each decamer is made up of two conformers of VP2, called VP2A and VP2B. 12 homodecamers assemble to form an icosahedral capsid. Interacts with protein mu-NS; in viral inclusions. Mg(2+) serves as cofactor. It depends on Mn(2+) as a cofactor.

Its subcellular location is the virion. It carries out the reaction ATP + H2O = ADP + phosphate + H(+). Its function is as follows. Inner capsid protein that self-assembles to form an icosahedral capsid with a T=2 symmetry, which consists of 120 copies of VP2, with channels at each of its five-fold vertices. This capsid constitutes the innermost concentric layer of the viral mature particle. Displays NTPase, RNA 5'-triphosphatase (RTPase) and RNA helicase activities and probably participates in transcription of the viral genome. Helicase activity might be involved in unwinding or reannealing dsRNA during RNA synthesis. RTPase enzymatic activity represents the first step in RNA capping, which yields a 5'-diphosphorylated plus-strand RNA. This Reovirus type 1 (strain Lang) (T1L) protein is Inner capsid protein lambda-1 (L3).